The sequence spans 480 residues: Docking protein 1 (480 aa).

Met1 bears the N-acetylmethionine mark. A PH domain is found at 3–119; the sequence is GALMEGPLFL…WVQILCRTAF (117 aa). Ser48 carries the phosphoserine modification. Residues 151 to 259 form the IRS-type PTB domain; it reads EGSQFWVTSQ…QQQKAQGKVG (109 aa). Positions 253-262 are enriched in low complexity; sequence KAQGKVGQGQ. The tract at residues 253–328 is disordered; the sequence is KAQGKVGQGQ…GSTPAGAGEG (76 aa). The segment covering 265–276 has biased composition (basic and acidic residues); the sequence is TRTDSHDGETEG. Residues Ser269 and Ser290 each carry the phosphoserine modification. A phosphotyrosine mark is found at Tyr295, Tyr336, and Tyr340. Tyr361 is subject to Phosphotyrosine; by INSR. A Phosphotyrosine modification is found at Tyr376. The residue at position 397 (Tyr397) is a Phosphotyrosine; by INSR. The segment at 398 to 480 is disordered; sequence ELPYNPATDD…RVGVKSEGST (83 aa). Residue Tyr408 is modified to Phosphotyrosine. The segment covering 410-423 has biased composition (pro residues); the sequence is VPPPRSSKPTPAPK. Ser415 is modified (phosphoserine). Low complexity predominate over residues 432–445; sequence SGTTAGSGSKGSDT. Over residues 446-455 the composition is skewed to polar residues; sequence ALYSQVQKSG. Position 448 is a phosphotyrosine (Tyr448).

It belongs to the DOK family. Type A subfamily. Interacts with RasGAP and INPP5D/SHIP1. Interacts directly with phosphorylated ITGB3. Interacts with SRMS (via the SH2 and SH3 domains). Post-translationally, constitutively tyrosine-phosphorylated. Phosphorylated by TEC. Phosphorylated by LYN. Phosphorylated on tyrosine residues by the insulin receptor kinase. Results in the negative regulation of the insulin signaling pathway. Phosphorylated on tyrosine residues by SRMS.

The protein resides in the cytoplasm. It localises to the nucleus. Functionally, DOK proteins are enzymatically inert adaptor or scaffolding proteins. They provide a docking platform for the assembly of multimolecular signaling complexes. DOK1 appears to be a negative regulator of the insulin signaling pathway. Modulates integrin activation by competing with talin for the same binding site on ITGB3. This chain is Docking protein 1 (Dok1), found in Rattus norvegicus (Rat).